A 241-amino-acid polypeptide reads, in one-letter code: Uridylate kinase (241 aa).

ATP is bound by residues 10 to 13 (KLSG), G53, and R57. Residues D72 and 133-140 (AGSPYFST) each bind UMP. ATP-binding residues include N161, Y167, and D170.

It belongs to the UMP kinase family. As to quaternary structure, homohexamer.

The protein resides in the cytoplasm. It carries out the reaction UMP + ATP = UDP + ADP. The protein operates within pyrimidine metabolism; CTP biosynthesis via de novo pathway; UDP from UMP (UMPK route): step 1/1. Inhibited by UTP. In terms of biological role, catalyzes the reversible phosphorylation of UMP to UDP. The polypeptide is Uridylate kinase (Aster yellows witches'-broom phytoplasma (strain AYWB)).